A 183-amino-acid chain; its full sequence is ATP-dependent protease subunit HslV (183 aa).

Threonine 13 is an active-site residue. The Na(+) site is built by glycine 168, cysteine 171, and threonine 174.

The protein belongs to the peptidase T1B family. HslV subfamily. As to quaternary structure, a double ring-shaped homohexamer of HslV is capped on each side by a ring-shaped HslU homohexamer. The assembly of the HslU/HslV complex is dependent on binding of ATP.

It localises to the cytoplasm. It catalyses the reaction ATP-dependent cleavage of peptide bonds with broad specificity.. Allosterically activated by HslU binding. Its function is as follows. Protease subunit of a proteasome-like degradation complex believed to be a general protein degrading machinery. This chain is ATP-dependent protease subunit HslV, found in Xanthomonas oryzae pv. oryzae (strain MAFF 311018).